We begin with the raw amino-acid sequence, 426 residues long: Enolase (426 aa).

Glutamine 163 contacts (2R)-2-phosphoglycerate. The active-site Proton donor is glutamate 205. Mg(2+) is bound by residues aspartate 242, glutamate 286, and aspartate 313. Lysine 338, arginine 367, serine 368, and lysine 389 together coordinate (2R)-2-phosphoglycerate. The Proton acceptor role is filled by lysine 338.

It belongs to the enolase family. The cofactor is Mg(2+).

Its subcellular location is the cytoplasm. The protein localises to the secreted. It localises to the cell surface. The catalysed reaction is (2R)-2-phosphoglycerate = phosphoenolpyruvate + H2O. The protein operates within carbohydrate degradation; glycolysis; pyruvate from D-glyceraldehyde 3-phosphate: step 4/5. Functionally, catalyzes the reversible conversion of 2-phosphoglycerate (2-PG) into phosphoenolpyruvate (PEP). It is essential for the degradation of carbohydrates via glycolysis. This Helicobacter pylori (strain ATCC 700392 / 26695) (Campylobacter pylori) protein is Enolase.